We begin with the raw amino-acid sequence, 325 residues long: Hydroxymethylglutaryl-CoA lyase, mitochondrial (325 aa).

The N-terminal 27 residues, 1-27 (MATVRKAFPQRLVGLASLRAASTSSMG), are a transit peptide targeting the mitochondrion. The Pyruvate carboxyltransferase domain maps to 33 to 300 (VKIVEVGPRD…HTGVNLQKLL (268 aa)). A substrate-binding site is contributed by R41. D42 serves as a coordination point for a divalent metal cation. Residue K48 is modified to N6-acetyllysine; alternate. Residue K48 is modified to N6-succinyllysine; alternate. Position 111 is an N6-acetyllysine (K111). N6-acetyllysine; alternate occurs at positions 137 and 179. N6-succinyllysine; alternate occurs at positions 137 and 179. A divalent metal cation contacts are provided by H233 and H235. Residue C266 is part of the active site. N275 is a binding site for a divalent metal cation. Positions 323–325 (CKL) match the Microbody targeting signal motif. K324 carries the post-translational modification N6-acetyllysine.

It belongs to the HMG-CoA lyase family. In terms of assembly, homodimer; disulfide-linked. Can also form homotetramers. In suckling rat, highest levels in liver and in intestine. Lower levels in heart, kidney and cerebellum. Weak expression in brain cortex, medulla and midbrain. Levels decrease slightly during weaning.

It localises to the mitochondrion matrix. It is found in the peroxisome. The catalysed reaction is (3S)-3-hydroxy-3-methylglutaryl-CoA = acetoacetate + acetyl-CoA. It participates in metabolic intermediate metabolism; (S)-3-hydroxy-3-methylglutaryl-CoA degradation; acetoacetate from (S)-3-hydroxy-3-methylglutaryl-CoA: step 1/1. Functionally, mitochondrial 3-hydroxy-3-methylglutaryl-CoA lyase that catalyzes a cation-dependent cleavage of (S)-3-hydroxy-3-methylglutaryl-CoA into acetyl-CoA and acetoacetate, a key step in ketogenesis. Terminal step in leucine catabolism. Ketone bodies (beta-hydroxybutyrate, acetoacetate and acetone) are essential as an alternative source of energy to glucose, as lipid precursors and as regulators of metabolism. The sequence is that of Hydroxymethylglutaryl-CoA lyase, mitochondrial (Hmgcl) from Rattus norvegicus (Rat).